A 371-amino-acid polypeptide reads, in one-letter code: Glycosyltransferase 8 domain-containing protein 1 (371 aa).

The Cytoplasmic portion of the chain corresponds to 1-7 (MSFRKVH). The chain crosses the membrane as a helical; Signal-anchor for type II membrane protein span at residues 8 to 28 (IAIILLAAVVFLLILHHNILG). Topologically, residues 29 to 371 (LTDILTRQSS…RRHGEADGTK (343 aa)) are lumenal. Residues N104, N249, and N257 are each glycosylated (N-linked (GlcNAc...) asparagine).

This sequence belongs to the glycosyltransferase 8 family.

It is found in the membrane. This is Glycosyltransferase 8 domain-containing protein 1 (glt8d1) from Xenopus tropicalis (Western clawed frog).